The following is a 253-amino-acid chain: Tryptophan synthase alpha chain (253 aa).

Active-site proton acceptor residues include Glu-46 and Asp-57.

The protein belongs to the TrpA family. Tetramer of two alpha and two beta chains.

The catalysed reaction is (1S,2R)-1-C-(indol-3-yl)glycerol 3-phosphate + L-serine = D-glyceraldehyde 3-phosphate + L-tryptophan + H2O. Its pathway is amino-acid biosynthesis; L-tryptophan biosynthesis; L-tryptophan from chorismate: step 5/5. Functionally, the alpha subunit is responsible for the aldol cleavage of indoleglycerol phosphate to indole and glyceraldehyde 3-phosphate. This Dictyoglomus turgidum (strain DSM 6724 / Z-1310) protein is Tryptophan synthase alpha chain.